Consider the following 137-residue polypeptide: Neutral phospholipase A2 ammodytin I2 (137 aa).

The first 16 residues, M1 to G16, serve as a signal peptide directing secretion. Cystine bridges form between C42–C131, C44–C60, C59–C111, C65–C137, C66–C104, C73–C97, and C91–C102. Ca(2+) is bound by residues Y43, G45, and G47. The active site involves H63. Residue D64 participates in Ca(2+) binding. The active site involves D105.

Belongs to the phospholipase A2 family. Group II subfamily. D49 sub-subfamily. Requires Ca(2+) as cofactor. Expressed by the venom gland.

It is found in the secreted. The enzyme catalyses a 1,2-diacyl-sn-glycero-3-phosphocholine + H2O = a 1-acyl-sn-glycero-3-phosphocholine + a fatty acid + H(+). Snake venom phospholipase A2 (PLA2) that has enzymatic activity but is non-toxic. Displays low binding affinity and enzymatic activity on phosphatidylserine-containing vesicles and HEK-293 plasma membranes, in contrast to ammodytoxins that have high activity on these phospholipids. PLA2 catalyzes the calcium-dependent hydrolysis of the 2-acyl groups in 3-sn-phosphoglycerides. This chain is Neutral phospholipase A2 ammodytin I2, found in Vipera ammodytes ammodytes (Western sand viper).